The following is a 423-amino-acid chain: ATP-dependent RNA helicase RhlB (423 aa).

The Q motif motif lies at L9 to A37. A Helicase ATP-binding domain is found at L40–V217. A53 to T60 serves as a coordination point for ATP. Positions D163 to D166 match the DEAD box motif. The Helicase C-terminal domain occupies K241–L388. The segment at K397–F423 is disordered. A compositionally biased stretch (low complexity) spans N400 to N410. The segment covering F413–F423 has biased composition (basic residues).

The protein belongs to the DEAD box helicase family. RhlB subfamily. Component of the RNA degradosome, which is a multiprotein complex involved in RNA processing and mRNA degradation.

It is found in the cytoplasm. The catalysed reaction is ATP + H2O = ADP + phosphate + H(+). In terms of biological role, DEAD-box RNA helicase involved in RNA degradation. Has RNA-dependent ATPase activity and unwinds double-stranded RNA. The chain is ATP-dependent RNA helicase RhlB from Pasteurella multocida (strain Pm70).